Reading from the N-terminus, the 176-residue chain is MRFFLCSIFMMISPIWPLGENPLPGDPYVIVNKRTNELAVILDNKVEGVYSVATGKTDDLTPEGEFSVTVKAENPYYRKKNIEGGSPDNPLGARWIGFDAKGTDGRIYGIHGTNREESVGKFVSNGCIRMHNDEVVHLFQTIPVGTRVLITDDNRSFEEIAIEHKALIKKQDIPIE.

The signal sequence occupies residues methionine 1–glycine 25. Residues proline 27–threonine 151 enclose the L,D-TPase catalytic domain. Histidine 111 functions as the Proton donor/acceptor in the catalytic mechanism. Cysteine 127 acts as the Nucleophile in catalysis.

Belongs to the YkuD family.

Its pathway is cell wall biogenesis; peptidoglycan biosynthesis. This chain is Putative L,D-transpeptidase YqjB (yqjB), found in Bacillus subtilis (strain 168).